The sequence spans 148 residues: EKC/KEOPS complex subunit Lage3 (148 aa).

Residues 1–21 (MQTAHTGLSHTADGADGQTSR) are disordered.

This sequence belongs to the CTAG/PCC1 family. Component of the EKC/KEOPS complex composed of at least GON7, TP53RK, TPRKB, OSGEP and LAGE3; the whole complex dimerizes.

Its subcellular location is the cytoplasm. The protein localises to the nucleus. In terms of biological role, component of the EKC/KEOPS complex that is required for the formation of a threonylcarbamoyl group on adenosine at position 37 (t(6)A37) in tRNAs that read codons beginning with adenine. The complex is probably involved in the transfer of the threonylcarbamoyl moiety of threonylcarbamoyl-AMP (TC-AMP) to the N6 group of A37. LAGE3 functions as a dimerization module for the complex. The chain is EKC/KEOPS complex subunit Lage3 from Mus musculus (Mouse).